The chain runs to 271 residues: Formamidopyrimidine-DNA glycosylase (271 aa).

The active-site Schiff-base intermediate with DNA is the P2. E3 functions as the Proton donor in the catalytic mechanism. K57 (proton donor; for beta-elimination activity) is an active-site residue. The DNA site is built by H90, R109, and K151. The FPG-type zinc finger occupies 236-270; that stretch reads HVYSRGGETCTSCGNLLSEIRLGQRTTVFCGICQT. Residue R260 is the Proton donor; for delta-elimination activity of the active site.

It belongs to the FPG family. Monomer. It depends on Zn(2+) as a cofactor.

The catalysed reaction is Hydrolysis of DNA containing ring-opened 7-methylguanine residues, releasing 2,6-diamino-4-hydroxy-5-(N-methyl)formamidopyrimidine.. It carries out the reaction 2'-deoxyribonucleotide-(2'-deoxyribose 5'-phosphate)-2'-deoxyribonucleotide-DNA = a 3'-end 2'-deoxyribonucleotide-(2,3-dehydro-2,3-deoxyribose 5'-phosphate)-DNA + a 5'-end 5'-phospho-2'-deoxyribonucleoside-DNA + H(+). In terms of biological role, involved in base excision repair of DNA damaged by oxidation or by mutagenic agents. Acts as a DNA glycosylase that recognizes and removes damaged bases. Has a preference for oxidized purines, such as 7,8-dihydro-8-oxoguanine (8-oxoG). Has AP (apurinic/apyrimidinic) lyase activity and introduces nicks in the DNA strand. Cleaves the DNA backbone by beta-delta elimination to generate a single-strand break at the site of the removed base with both 3'- and 5'-phosphates. In Shewanella baltica (strain OS195), this protein is Formamidopyrimidine-DNA glycosylase.